Here is a 126-residue protein sequence, read N- to C-terminus: CD59 glycoprotein (126 aa).

The N-terminal stretch at 1–22 (MRARRGFILLLLLAVLCSTGVS) is a signal peptide. In terms of domain architecture, UPAR/Ly6 spans 23–110 (LRCYNCLDPV…NGAISLLGKT (88 aa)). 5 cysteine pairs are disulfide-bonded: C25/C48, C28/C35, C41/C61, C67/C85, and C86/C91. N38 carries N-linked (GlcNAc...) asparagine glycosylation. N101 carries GPI-anchor amidated asparagine lipidation. The propeptide at 102–126 (GAISLLGKTALLVTSVLAAILKPCF) is removed in mature form.

In terms of assembly, interacts with T-cell surface antigen CD2. In terms of processing, N- and O-glycosylated.

The protein resides in the cell membrane. The protein localises to the secreted. Functionally, potent inhibitor of the complement membrane attack complex (MAC) action, which protects self-cells from damage during complement activation. Acts by binding to the beta-haipins of C8 (C8A and C8B) components of the assembling MAC, forming an intermolecular beta-sheet that prevents incorporation of the multiple copies of C9 required for complete formation of the osmolytic pore. The chain is CD59 glycoprotein from Rattus norvegicus (Rat).